Here is a 330-residue protein sequence, read N- to C-terminus: Ketol-acid reductoisomerase (NADP(+)) (330 aa).

A KARI N-terminal Rossmann domain is found at 1 to 181 (MKVLYDDDVN…GLTRAGVIET (181 aa)). Residues 24 to 27 (YGSQ), Arg-47, Ser-52, and 82 to 85 (DEIQ) each bind NADP(+). Residue His-107 is part of the active site. NADP(+) is bound at residue Gly-133. In terms of domain architecture, KARI C-terminal knotted spans 182-327 (TYREETETDL…KNLRIACGLQ (146 aa)). Mg(2+)-binding residues include Asp-190, Glu-194, Glu-226, and Glu-230. Residue Ser-251 participates in substrate binding.

This sequence belongs to the ketol-acid reductoisomerase family. The cofactor is Mg(2+).

It carries out the reaction (2R)-2,3-dihydroxy-3-methylbutanoate + NADP(+) = (2S)-2-acetolactate + NADPH + H(+). The enzyme catalyses (2R,3R)-2,3-dihydroxy-3-methylpentanoate + NADP(+) = (S)-2-ethyl-2-hydroxy-3-oxobutanoate + NADPH + H(+). Its pathway is amino-acid biosynthesis; L-isoleucine biosynthesis; L-isoleucine from 2-oxobutanoate: step 2/4. It participates in amino-acid biosynthesis; L-valine biosynthesis; L-valine from pyruvate: step 2/4. Its function is as follows. Involved in the biosynthesis of branched-chain amino acids (BCAA). Catalyzes an alkyl-migration followed by a ketol-acid reduction of (S)-2-acetolactate (S2AL) to yield (R)-2,3-dihydroxy-isovalerate. In the isomerase reaction, S2AL is rearranged via a Mg-dependent methyl migration to produce 3-hydroxy-3-methyl-2-ketobutyrate (HMKB). In the reductase reaction, this 2-ketoacid undergoes a metal-dependent reduction by NADPH to yield (R)-2,3-dihydroxy-isovalerate. This chain is Ketol-acid reductoisomerase (NADP(+)), found in Methanosphaera stadtmanae (strain ATCC 43021 / DSM 3091 / JCM 11832 / MCB-3).